The primary structure comprises 54 residues: Rubredoxin (54 aa).

Positions 1–54 constitute a Rubredoxin-like domain; it reads MKKYVCVVCGYIYDPAEGDPDNGVNPGTSFEDIPDDWVCPLCGVGKDQFEPSEE. Fe cation is bound by residues cysteine 6, cysteine 9, cysteine 39, and cysteine 42.

This sequence belongs to the rubredoxin family. Requires Fe(3+) as cofactor.

Rubredoxin is a small nonheme, iron protein lacking acid-labile sulfide. Its single Fe, chelated to 4 Cys, functions as an electron acceptor and may also stabilize the conformation of the molecule. Functions as an intermediate component in the electron transfer chain: NADH-&gt;NROR-&gt;Rd-&gt;FprA1/2 in which Rd serves as the proximal electron donor to the FDPs that exhibit H(2)O-forming NADH oxidase activity. Also functions as the proximal electron donor to the Dfx and revRbr proteins that display superoxide reductase (SOR) and NADH peroxidase activity, respectively. Therefore, is a key electron carrier in an efficient multienzyme complex that can scavenge O(2) and reactive oxygen species (ROS), and thus plays an important role in the oxidative stress defense system in C.acetobutylicum, an obligate anaerobic bacterium. This Clostridium acetobutylicum (strain ATCC 824 / DSM 792 / JCM 1419 / IAM 19013 / LMG 5710 / NBRC 13948 / NRRL B-527 / VKM B-1787 / 2291 / W) protein is Rubredoxin (rd).